The sequence spans 430 residues: tRNA(Ile)-lysidine synthase (430 aa).

Position 21-26 (21-26 (SGGLDS)) interacts with ATP.

The protein belongs to the tRNA(Ile)-lysidine synthase family.

It is found in the cytoplasm. It catalyses the reaction cytidine(34) in tRNA(Ile2) + L-lysine + ATP = lysidine(34) in tRNA(Ile2) + AMP + diphosphate + H(+). Its function is as follows. Ligates lysine onto the cytidine present at position 34 of the AUA codon-specific tRNA(Ile) that contains the anticodon CAU, in an ATP-dependent manner. Cytidine is converted to lysidine, thus changing the amino acid specificity of the tRNA from methionine to isoleucine. In Salmonella heidelberg (strain SL476), this protein is tRNA(Ile)-lysidine synthase.